A 222-amino-acid polypeptide reads, in one-letter code: Protein GrpE (222 aa).

The interval 1–64 (MSDQNLGQGS…GEEILSDDDL (64 aa)) is disordered. Basic and acidic residues predominate over residues 16–44 (EEPIVRDKRRIDPETGKVREPQDLSHEEL). Residues 54–64 (QGEEILSDDDL) are compositionally biased toward acidic residues.

The protein belongs to the GrpE family. As to quaternary structure, homodimer.

The protein localises to the cytoplasm. Its function is as follows. Participates actively in the response to hyperosmotic and heat shock by preventing the aggregation of stress-denatured proteins, in association with DnaK and GrpE. It is the nucleotide exchange factor for DnaK and may function as a thermosensor. Unfolded proteins bind initially to DnaJ; upon interaction with the DnaJ-bound protein, DnaK hydrolyzes its bound ATP, resulting in the formation of a stable complex. GrpE releases ADP from DnaK; ATP binding to DnaK triggers the release of the substrate protein, thus completing the reaction cycle. Several rounds of ATP-dependent interactions between DnaJ, DnaK and GrpE are required for fully efficient folding. This Leifsonia xyli subsp. xyli (strain CTCB07) protein is Protein GrpE.